Reading from the N-terminus, the 461-residue chain is Acetylornithine aminotransferase, mitochondrial (461 aa).

The interval 36–56 (YATASQLTHPDPTEDSPSGKM) is disordered. The residue at position 312 (K312) is an N6-(pyridoxal phosphate)lysine.

This sequence belongs to the class-III pyridoxal-phosphate-dependent aminotransferase family. The cofactor is pyridoxal 5'-phosphate.

The protein resides in the mitochondrion matrix. The catalysed reaction is N(2)-acetyl-L-ornithine + 2-oxoglutarate = N-acetyl-L-glutamate 5-semialdehyde + L-glutamate. The protein operates within amino-acid biosynthesis; L-arginine biosynthesis; N(2)-acetyl-L-ornithine from L-glutamate: step 4/4. The protein is Acetylornithine aminotransferase, mitochondrial (arg-8) of Neurospora crassa (strain ATCC 24698 / 74-OR23-1A / CBS 708.71 / DSM 1257 / FGSC 987).